The primary structure comprises 46 residues: Large ribosomal subunit protein bL33B (46 aa).

The protein belongs to the bacterial ribosomal protein bL33 family.

The sequence is that of Large ribosomal subunit protein bL33B (rpmG2) from Mycoplasmopsis pulmonis (strain UAB CTIP) (Mycoplasma pulmonis).